We begin with the raw amino-acid sequence, 281 residues long: UPF0162 protein XF_1494 (281 aa).

TPR repeat units lie at residues 193-226 (VRILRNLHSVYANTNRWDRAARCADRILKLVPNQ) and 227-260 (PEALRDRGLAYLQLGHRSGARNDLTRYLQLYPST).

This sequence belongs to the UPF0162 family.

In Xylella fastidiosa (strain 9a5c), this protein is UPF0162 protein XF_1494.